The following is a 131-amino-acid chain: Peptide methionine sulfoxide reductase MsrB (131 aa).

Residues 8–130 (LDEWRSMLDP…NSVCIDLRPR (123 aa)) form the MsrB domain. Zn(2+)-binding residues include C47, C50, C96, and C99. C119 acts as the Nucleophile in catalysis.

The protein belongs to the MsrB Met sulfoxide reductase family. Zn(2+) is required as a cofactor.

The catalysed reaction is L-methionyl-[protein] + [thioredoxin]-disulfide + H2O = L-methionyl-(R)-S-oxide-[protein] + [thioredoxin]-dithiol. The protein is Peptide methionine sulfoxide reductase MsrB of Pseudomonas putida (strain ATCC 47054 / DSM 6125 / CFBP 8728 / NCIMB 11950 / KT2440).